The primary structure comprises 513 residues: HMG box-containing protein 1 (513 aa).

A disordered region spans residues 151-181 (RPPPVSSAKSGPAFPHDHWKEETPVRHERAN). A compositionally biased stretch (basic and acidic residues) spans 165–181 (PHDHWKEETPVRHERAN). Residues 202-343 (WCNSWPSTVW…PPGHPDAINF (142 aa)) enclose the AXH domain. The HMG box DNA-binding region spans 433-501 (CKRPMNAFML…EQKRLNPDCW (69 aa)).

As to quaternary structure, binds TCF4. Binds RB1. Binds the second PAH repeat of SIN3A. In terms of processing, ubiquitinated by the CTLH E3 ubiquitin-protein ligase complex, leading to subsequent proteasomal degradation. In terms of tissue distribution, highly expressed in liver, adipose tissue, lung, brain, spleen, kidney, skeletal muscle and heart.

The protein resides in the nucleus. Functionally, transcriptional repressor that binds to the promoter region of target genes. Plays a role in the regulation of the cell cycle and of the Wnt pathway. Binds preferentially to the sequence 5'-TTCATTCATTCA-3'. Binding to the histone H1.0 promoter is enhanced by interaction with RB1. Disrupts the interaction between DNA and TCF4. The polypeptide is HMG box-containing protein 1 (Hbp1) (Rattus norvegicus (Rat)).